The primary structure comprises 495 residues: ATP synthase subunit beta, chloroplastic (495 aa).

172–179 contributes to the ATP binding site; it reads GGAGVGKT.

Belongs to the ATPase alpha/beta chains family. As to quaternary structure, F-type ATPases have 2 components, CF(1) - the catalytic core - and CF(0) - the membrane proton channel. CF(1) has five subunits: alpha(3), beta(3), gamma(1), delta(1), epsilon(1). CF(0) has four main subunits: a(1), b(1), b'(1) and c(9-12).

The protein localises to the plastid. It is found in the chloroplast thylakoid membrane. It carries out the reaction ATP + H2O + 4 H(+)(in) = ADP + phosphate + 5 H(+)(out). In terms of biological role, produces ATP from ADP in the presence of a proton gradient across the membrane. The catalytic sites are hosted primarily by the beta subunits. This Pseudogaltonia clavata (Cape hyacinth) protein is ATP synthase subunit beta, chloroplastic.